Here is a 142-residue protein sequence, read N- to C-terminus: Large ribosomal subunit protein uL16 (142 aa).

The protein belongs to the universal ribosomal protein uL16 family. As to quaternary structure, part of the 50S ribosomal subunit.

Its function is as follows. Binds 23S rRNA and is also seen to make contacts with the A and possibly P site tRNAs. The protein is Large ribosomal subunit protein uL16 of Aquifex aeolicus (strain VF5).